The chain runs to 1078 residues: Zinc finger protein 827 (1078 aa).

The span at 1–10 shows a compositional bias: basic and acidic residues; that stretch reads MPRRKQEQPK. The segment at 1–14 is mediates direct interaction with RBBP4; that stretch reads MPRRKQEQPKRLPS. Positions 1-76 are disordered; it reads MPRRKQEQPK…PDTSLGSATP (76 aa). Positions 3-5 match the RRK motif; mediates NuRD recruitment to telomeres motif; the sequence is RRK. Composition is skewed to polar residues over residues 33 to 42 and 62 to 76; these read YGNSSETPSE and EQSTSPDTSLGSATP. Glycyl lysine isopeptide (Lys-Gly) (interchain with G-Cter in SUMO2) cross-links involve residues Lys-175, Lys-215, and Lys-225. The tract at residues 307–341 is disordered; the sequence is SLLPDDPLPLPSSEKKPEKVTPPPPPPPPTAQPPQ. Positions 326 to 338 are enriched in pro residues; it reads VTPPPPPPPPTAQ. Glycyl lysine isopeptide (Lys-Gly) (interchain with G-Cter in SUMO2) cross-links involve residues Lys-357 and Lys-369. C2H2-type zinc fingers lie at residues 371–393, 399–421, and 430–452; these read FQCPICGLVIKRKSYWKRHMVIH, HQCPLCPFRCARKDNLKSHMKVH, and FQCQLCPFTSSRHFSLKLHMRCH. Glycyl lysine isopeptide (Lys-Gly) (interchain with G-Cter in SUMO2) cross-links involve residues Lys-463, Lys-472, Lys-520, Lys-546, Lys-577, Lys-584, and Lys-594. The interval 466-490 is disordered; the sequence is IPDPDVKGSPHLSDSGCLGQQREGG. Positions 594-640 are disordered; it reads KEEPKEEESLSMPLPRSSYVFSPEPEVSTPSVSEDPLTPQEGKGSVL. The span at 613–627 shows a compositional bias: low complexity; that stretch reads VFSPEPEVSTPSVSE. Residues Lys-636 and Lys-655 each participate in a glycyl lysine isopeptide (Lys-Gly) (interchain with G-Cter in SUMO2) cross-link. Lys-670 is covalently cross-linked (Glycyl lysine isopeptide (Lys-Gly) (interchain with G-Cter in SUMO1); alternate). Lys-670 is covalently cross-linked (Glycyl lysine isopeptide (Lys-Gly) (interchain with G-Cter in SUMO2); alternate). Residues Lys-701, Lys-707, Lys-739, Lys-775, and Lys-795 each participate in a glycyl lysine isopeptide (Lys-Gly) (interchain with G-Cter in SUMO2) cross-link. C2H2-type zinc fingers lie at residues 814-836 and 842-864; these read FPCDVCGKVFGRQQTLSRHLSLH and YKCHLCPYAAKCRANLNQHLTVH. Residues Lys-867 and Lys-888 each participate in a glycyl lysine isopeptide (Lys-Gly) (interchain with G-Cter in SUMO2) cross-link. C2H2-type zinc fingers lie at residues 894–916 and 926–949; these read YSCHVCGFETELNVQFVSHMSLH and ICCTACDFVTMEEAEIKTHIGTKH. Residues 945–957 show a composition bias toward basic and acidic residues; sequence IGTKHTGDDRKTP. The tract at residues 945 to 990 is disordered; sequence IGTKHTGDDRKTPSESNSPSSSSLSTLSDSANGKDDSDSSQKNKGG. Lys-955 is covalently cross-linked (Glycyl lysine isopeptide (Lys-Gly) (interchain with G-Cter in SUMO2)). Low complexity predominate over residues 958-974; the sequence is SESNSPSSSSLSTLSDS. Residues 976 to 985 show a composition bias toward basic and acidic residues; sequence NGKDDSDSSQ. Lys-1011 is covalently cross-linked (Glycyl lysine isopeptide (Lys-Gly) (interchain with G-Cter in SUMO2)). C2H2-type zinc fingers lie at residues 1016-1038 and 1044-1066; these read FECVFCNFVCKTKNMFERHLQIH and FECDVCHKFMKTPEQLLEHKKCH.

This sequence belongs to the krueppel C2H2-type zinc-finger protein family. Part of a transcription inhibitory ribonucleoprotein complex composed at least of the circular RNA circZNF827, HNRNPK and HNRNPL. Interacts with the nucleosome remodeling and histone deacetylase/NuRD complex. Interacts with RBBP4; the interaction is direct and recruits RBBP4, a component of the NuRD complex, to telomeres.

It is found in the nucleus. Its subcellular location is the chromosome. It localises to the telomere. Functionally, as part of a ribonucleoprotein complex composed at least of HNRNPK, HNRNPL and the circular RNA circZNF827 that nucleates the complex on chromatin, may negatively regulate the transcription of genes involved in neuronal differentiation. Could also recruit the nucleosome remodeling and histone deacetylase/NuRD complex to telomeric regions of chromosomes to regulate chromatin remodeling as part of telomere maintenance. This Mus musculus (Mouse) protein is Zinc finger protein 827 (Znf827).